Consider the following 228-residue polypeptide: MTVIVLSGPIGAGKSSLTGILSKYLGTKPFYESVDDNPVLPLFYADPKKYAFLLQVYFLNTRFHSIKNALTQDNNVLDRSIYEDALFFQMNADIGRATSEEVDTYYELLHNMMGELDRMPKKNPDLLVHINVSYDTMIKRIKKRGRPYEQLSYDSTLEDYYKRLLRYYKPWYEKYDYSPKMVIDGDKYDFMSSEADREIVLDQIVDKLKEVGKLPMDWDKSTDIQIEA.

8 to 16 (GPIGAGKSS) serves as a coordination point for ATP. 3 residues coordinate substrate: glutamate 32, tyrosine 44, and glutamine 55. The active-site Proton acceptor is aspartate 78. 3 residues coordinate substrate: arginine 79, aspartate 84, and glutamate 149.

It belongs to the DCK/DGK family. As to quaternary structure, heterodimer of a deoxyadenosine (DAK) and a deoxyguanosine kinase (DGK).

It catalyses the reaction 2'-deoxyguanosine + ATP = dGMP + ADP + H(+). Its function is as follows. DGK/DAK plays an essential role in generating the deoxyribonucleotide precursors, dGTP and dATP, for DNA metabolism. In Lactobacillus acidophilus (strain ATCC 700396 / NCK56 / N2 / NCFM), this protein is Deoxyguanosine kinase.